The chain runs to 74 residues: LMTGVESARDAYIAKPHNCVYECFDAFSSYCNGVCTKNGAKSGYCLILGTYGNGCWCIALPDNVPIRIPGKCHR.

Positions 1-7 are cleaved as a signal peptide; sequence LMTGVES. In terms of domain architecture, LCN-type CS-alpha/beta spans 9–73; sequence RDAYIAKPHN…VPIRIPGKCH (65 aa). Intrachain disulfides connect Cys19–Cys72, Cys23–Cys45, Cys31–Cys55, and Cys35–Cys57. A propeptide (removed by a carboxypeptidase) is located at residue Arg74.

Belongs to the long (4 C-C) scorpion toxin superfamily. Sodium channel inhibitor family. Alpha subfamily. Expressed by the venom gland.

The protein localises to the secreted. In terms of biological role, alpha toxins bind voltage-independently at site-3 of sodium channels (Nav) and inhibit the inactivation of the activated channels, thereby blocking neuronal transmission. In Mesobuthus eupeus (Lesser Asian scorpion), this protein is Sodium channel neurotoxin MeuNaTxalpha-11.